Here is a 218-residue protein sequence, read N- to C-terminus: MNNRIILFQNFGLKHWIDMFNKMHAFTEVRNINTYDEIWFLEHYPIFTQGLLQKINTITYNNDILHDIPIVSTDRGGQITYHGPGQQILYFLIDLKRRKITIRDLINIMQNLIIETLNYFSIKSHIKKNSPGVYVNNKKISSLGLRVKKGFTLHGLSLNVDMDLTPFNYIYPCGDINIKMTQVKEFNSFLTLNDIRVILIKKLSQLLNVSIIEKFSIK.

Residues 32-211 (INTYDEIWFL…KLSQLLNVSI (180 aa)) enclose the BPL/LPL catalytic domain. Residues 75-82 (RGGQITYH), 142-144 (SLG), and 155-157 (GLS) contribute to the substrate site. Cysteine 173 functions as the Acyl-thioester intermediate in the catalytic mechanism.

This sequence belongs to the LipB family.

It is found in the cytoplasm. It carries out the reaction octanoyl-[ACP] + L-lysyl-[protein] = N(6)-octanoyl-L-lysyl-[protein] + holo-[ACP] + H(+). It functions in the pathway protein modification; protein lipoylation via endogenous pathway; protein N(6)-(lipoyl)lysine from octanoyl-[acyl-carrier-protein]: step 1/2. In terms of biological role, catalyzes the transfer of endogenously produced octanoic acid from octanoyl-acyl-carrier-protein onto the lipoyl domains of lipoate-dependent enzymes. Lipoyl-ACP can also act as a substrate although octanoyl-ACP is likely to be the physiological substrate. The polypeptide is Octanoyltransferase (Buchnera aphidicola subsp. Schizaphis graminum (strain Sg)).